Reading from the N-terminus, the 494-residue chain is MFLAKSIVCLALLAVANAQFDTNYASGRSGMVHLFEWKWDDIAAECENFLGPNGYAGVQVSPVNENAVKDSRPWWERYQPISYKLETRSGNEEQFASMVKRCNAVGVRTYVDVVFNHMAADGGTYGTGGSTASPSSKSYPGVPYSSLDFNPTCAISNYNDANEVRNCELVGLRDLNQGNSYVQDKVVEFLDHLIDLGVAGFRVDAAKHMWPADLAVIYGRLKNLNTDHGFASGSKAYIVQEVIDMGGEAISKSEYTGLGAITEFRHSDSIGKVFRGKDQLQYLTNWGTAWGFAASDRSLVFVDNHDNQRGHGAGGADVLTYKVPKQYKMASAFMLAHPFGTPRVMSSFSFTDTDQGPPTTDGHNIASPIFNSDNSCSGGWVCEHRWRQIYNMVAFRNTVGSDEIQNWWDNGSNQISFSRGSRGFVAFNNDNYDLNSSLQTGLPAGTYCDVISGSKSGSSCTGKTVTVGSDGRASIYIGSSEDDGVLAIHVNAKL.

An N-terminal signal peptide occupies residues 1–18 (MFLAKSIVCLALLAVANA). Position 19 is a pyrrolidone carboxylic acid (Q19). C46 and C102 form a disulfide bridge. Residues N116, R165, and D174 each contribute to the Ca(2+) site. The cysteines at positions 153 and 167 are disulfide-linked. R202 lines the chloride pocket. Catalysis depends on D204, which acts as the Nucleophile. H208 contributes to the Ca(2+) binding site. The active-site Proton donor is E241. Chloride contacts are provided by N304 and R343. 2 disulfides stabilise this stretch: C376–C382 and C448–C460.

This sequence belongs to the glycosyl hydrolase 13 family. As to quaternary structure, monomer. It depends on Ca(2+) as a cofactor. The cofactor is chloride.

It catalyses the reaction Endohydrolysis of (1-&gt;4)-alpha-D-glucosidic linkages in polysaccharides containing three or more (1-&gt;4)-alpha-linked D-glucose units.. This chain is Alpha-amylase B (Amy-d), found in Drosophila melanogaster (Fruit fly).